We begin with the raw amino-acid sequence, 268 residues long: MIKVLSPAKINLGLWVLGRLPSGYHEILTLYQEIPFYDEIYIREGVLRVETNIGIPQEENLVYKGLREFERITGIEINYSIFIQKNIPPGAGLGGGSSNLAVVLKKVNELLGSPLSEEELRELVGSISADAPFFLLGKSAIGRGKGEVLEPVETEISGKITLVIPQVSSSTGRVYSSLREEHFVTPEYAEEKIQRIISGEVEEIENVLGDIARELYPEINEVYRFVEYLGFKPFVSGSGSTVYFFGGASEELKKAAKMRGWKVVELEL.

Lys-9 is a catalytic residue. 88–98 lines the ATP pocket; sequence PPGAGLGGGSS. Asp-130 is a catalytic residue.

This sequence belongs to the GHMP kinase family. IspE subfamily.

It catalyses the reaction 4-CDP-2-C-methyl-D-erythritol + ATP = 4-CDP-2-C-methyl-D-erythritol 2-phosphate + ADP + H(+). Its pathway is isoprenoid biosynthesis; isopentenyl diphosphate biosynthesis via DXP pathway; isopentenyl diphosphate from 1-deoxy-D-xylulose 5-phosphate: step 3/6. Functionally, catalyzes the phosphorylation of the position 2 hydroxy group of 4-diphosphocytidyl-2C-methyl-D-erythritol. In Aquifex aeolicus (strain VF5), this protein is 4-diphosphocytidyl-2-C-methyl-D-erythritol kinase.